The primary structure comprises 265 residues: MQTQSLNQTSYVFRTENLNVYYGSNLAVKNVTLDIPARQITAFIGPSGCGKSTILRCFNRTNDLIPGARVEGKLTYHGKDLYAKEVDPVAVRRRIGMVFQKPNPFPKSIYDNVAYGPRVLGMKVDLDEVVETSLKRAALWDEVKDKLKENGQSLSGGQQQRLCIARALAVQPDVILMDEPCSALDPISTRRIEELMKELVQDYTIIIVTHNLQQAGRVSDMTAFFSVELVGSNRVGELIEFDRTEVIFNSPTKQATRDYVEGRFG.

In terms of domain architecture, ABC transporter spans 13-260 (FRTENLNVYY…PTKQATRDYV (248 aa)). 45 to 52 (GPSGCGKS) contributes to the ATP binding site.

It belongs to the ABC transporter superfamily. Phosphate importer (TC 3.A.1.7) family. In terms of assembly, the complex is composed of two ATP-binding proteins (PstB), two transmembrane proteins (PstC and PstA) and a solute-binding protein (PstS).

It localises to the cell inner membrane. It carries out the reaction phosphate(out) + ATP + H2O = ADP + 2 phosphate(in) + H(+). Functionally, part of the ABC transporter complex PstSACB involved in phosphate import. Responsible for energy coupling to the transport system. In Synechococcus sp. (strain JA-3-3Ab) (Cyanobacteria bacterium Yellowstone A-Prime), this protein is Phosphate import ATP-binding protein PstB 2.